A 325-amino-acid chain; its full sequence is BTB/POZ domain-containing protein KCTD12 (325 aa).

The disordered stretch occupies residues 1–28; sequence MALADSTRGLPNGGGGGGGSGSSSSSAE. A2 carries the post-translational modification N-acetylalanine. Gly residues predominate over residues 11-21; that stretch reads PNGGGGGGGSG. At Y119 the chain carries Phosphotyrosine. Residues 129–202 form a disordered region; the sequence is LGAPQQPGPG…PLLTPSQSLD (74 aa). Residues S151, S171, and S185 each carry the phosphoserine modification. T196 carries the phosphothreonine modification. Position 200 is a phosphoserine (S200).

As to quaternary structure, interacts as a tetramer with GABBR1 and GABBR2. Present in a variety of fetal organs, with highest expression levels in the cochlea and brain and, in stark contrast, is detected only at extremely low levels in adult organs, such as brain and lung.

Its subcellular location is the presynaptic cell membrane. It localises to the postsynaptic cell membrane. Auxiliary subunit of GABA-B receptors that determine the pharmacology and kinetics of the receptor response. Increases agonist potency and markedly alter the G-protein signaling of the receptors by accelerating onset and promoting desensitization. The polypeptide is BTB/POZ domain-containing protein KCTD12 (KCTD12) (Homo sapiens (Human)).